The following is a 270-amino-acid chain: Molybdenum storage protein subunit beta (270 aa).

Octamer consisting of 4 alpha and 4 beta chains.

The protein localises to the cytoplasm. Functionally, intracellular storage of molybdenum. Binds polyoxomolybdates. Can bind at least 90 molybdenum atoms per protein molecule. This is Molybdenum storage protein subunit beta from Azotobacter vinelandii (strain DJ / ATCC BAA-1303).